The chain runs to 164 residues: ATP synthase subunit b (164 aa).

Residues 8 to 28 (IGLFFWQTIVFLILLFLMAKF) traverse the membrane as a helical segment.

This sequence belongs to the ATPase B chain family. In terms of assembly, F-type ATPases have 2 components, F(1) - the catalytic core - and F(0) - the membrane proton channel. F(1) has five subunits: alpha(3), beta(3), gamma(1), delta(1), epsilon(1). F(0) has three main subunits: a(1), b(2) and c(10-14). The alpha and beta chains form an alternating ring which encloses part of the gamma chain. F(1) is attached to F(0) by a central stalk formed by the gamma and epsilon chains, while a peripheral stalk is formed by the delta and b chains.

The protein resides in the cell membrane. Functionally, f(1)F(0) ATP synthase produces ATP from ADP in the presence of a proton or sodium gradient. F-type ATPases consist of two structural domains, F(1) containing the extramembraneous catalytic core and F(0) containing the membrane proton channel, linked together by a central stalk and a peripheral stalk. During catalysis, ATP synthesis in the catalytic domain of F(1) is coupled via a rotary mechanism of the central stalk subunits to proton translocation. In terms of biological role, component of the F(0) channel, it forms part of the peripheral stalk, linking F(1) to F(0). The polypeptide is ATP synthase subunit b (Christiangramia forsetii (strain DSM 17595 / CGMCC 1.15422 / KT0803) (Gramella forsetii)).